Reading from the N-terminus, the 148-residue chain is Deoxyuridine 5'-triphosphate nucleotidohydrolase (148 aa).

Residues Arg-67–Gly-69, Asn-80, Leu-84–Asp-86, and Met-94 each bind substrate.

It belongs to the dUTPase family. Requires Mg(2+) as cofactor.

The catalysed reaction is dUTP + H2O = dUMP + diphosphate + H(+). It participates in pyrimidine metabolism; dUMP biosynthesis; dUMP from dCTP (dUTP route): step 2/2. Functionally, this enzyme is involved in nucleotide metabolism: it produces dUMP, the immediate precursor of thymidine nucleotides and it decreases the intracellular concentration of dUTP so that uracil cannot be incorporated into DNA. The polypeptide is Deoxyuridine 5'-triphosphate nucleotidohydrolase (Burkholderia cenocepacia (strain ATCC BAA-245 / DSM 16553 / LMG 16656 / NCTC 13227 / J2315 / CF5610) (Burkholderia cepacia (strain J2315))).